The primary structure comprises 302 residues: MFRLTRLSNKPILSPIKEHEWEKEAVFNAAVIYEGNKFHLFYRASNNKFVLNTEKPEEKYKFVSSIGYAVSEDGINFERFDKPVLVGEIPQEAWGVEDPRITKIDNKYYMLYTGFGGRDWLDFRICMVWSDDLKNWKGHRIVLDEPNKDAALLSEKINGKYVLFHRRMPDIWIAYSDDLVNWYNHKIIMSPKSHTWESKKIGIAGPPIKREDGWLLIYHGVDNNNVYRLGVALLDLKDPSKVIARQKEPILEPELDWEINGLVPNVVFSCGAVEVNDMYYVYYGAADTHIGVAVIEKEKVKF.

Belongs to the glycosyl hydrolase 130 family. As to quaternary structure, monomer.

The catalysed reaction is beta-D-mannopyranosyl-(1-&gt;2)-D-mannopyranose + phosphate = alpha-D-mannose 1-phosphate + D-mannose. Its pathway is nucleotide-sugar biosynthesis; GDP-alpha-D-mannose biosynthesis. Probably involved in a salvage pathway for GDP-D-mannose biosynthesis. Catalyzes the reversible phosphorolysis of 1,2-beta-oligomannan. In phosphorolytic reactions, prefers beta-1,2-mannobiose (beta-1,2-Man2) as substrate. Produces alpha-D-mannose 1-phosphate, which is the precursor of GDP-D-mannose. This chain is Beta-1,2-mannobiose phosphorylase, found in Thermoanaerobacter sp. (strain X514).